The chain runs to 213 residues: MAAPEQIAGEFENWLNERLDSLEVDREVYGAYILGVLQEEESDEEQKDALQGILSAFLEEETLEEVCQEILKQWTECCSRSGAKSNQADAEVQAIASLIEKQAQIVVKQKEVSEDAKKRKEAVLAQYANVTDDEDEAEEEEQVPVGIPSDKSLFKNTNVEDVLNRRKLQRDQAKEDAQKKKEQDKMQREKDKLSKQERKDKEKKRTQKGERKR.

Residues 119–206 are a coiled coil; that stretch reads RKEAVLAQYA…ERKDKEKKRT (88 aa). The interval 127–213 is disordered; the sequence is YANVTDDEDE…KRTQKGERKR (87 aa). Residues 131-142 are compositionally biased toward acidic residues; that stretch reads TDDEDEAEEEEQ. Over residues 169–200 the composition is skewed to basic and acidic residues; the sequence is QRDQAKEDAQKKKEQDKMQREKDKLSKQERKD. Over residues 201 to 213 the composition is skewed to basic residues; it reads KEKKRTQKGERKR.

This sequence belongs to the CCDC43 family.

This is Coiled-coil domain-containing protein 43 (ccdc43) from Danio rerio (Zebrafish).